The following is a 169-amino-acid chain: Cytochrome c oxidase subunit 4 isoform 1, mitochondrial (169 aa).

Residues 1 to 22 (MLATRVFSLVGKRAISTSVCVR) constitute a mitochondrion transit peptide. Residues 23–98 (AHESVVKSED…SFAEMNRGSN (76 aa)) are Mitochondrial matrix-facing. The residue at position 29 (K29) is an N6-acetyllysine; alternate. At K29 the chain carries N6-succinyllysine; alternate. K53 bears the N6-acetyllysine mark. A phosphoserine mark is found at S56 and S58. K60 carries the post-translational modification N6-acetyllysine; alternate. K60 bears the N6-succinyllysine; alternate mark. K67 bears the N6-acetyllysine mark. The chain crosses the membrane as a helical span at residues 99-124 (EWKTVVGGAMFFIGFTALVIMWQKHY). Residues 125-169 (VYGPLPQSFDKEWVAKQTKRMLDMKVNPIQGLASKWDYEKNEWKK) lie on the Mitochondrial intermembrane side of the membrane.

It belongs to the cytochrome c oxidase IV family. In terms of assembly, component of the cytochrome c oxidase (complex IV, CIV), a multisubunit enzyme composed of 14 subunits. The complex is composed of a catalytic core of 3 subunits MT-CO1, MT-CO2 and MT-CO3, encoded in the mitochondrial DNA, and 11 supernumerary subunits COX4I1 (or COX4I2), COX5A, COX5B, COX6A1 (or COX6A2), COX6B1 (or COX6B2), COX6C, COX7A2 (or COX7A1), COX7B, COX7C, COX8A and NDUFA4, which are encoded in the nuclear genome. The complex exists as a monomer or a dimer and forms supercomplexes (SCs) in the inner mitochondrial membrane with NADH-ubiquinone oxidoreductase (complex I, CI) and ubiquinol-cytochrome c oxidoreductase (cytochrome b-c1 complex, complex III, CIII), resulting in different assemblies (supercomplex SCI(1)III(2)IV(1) and megacomplex MCI(2)III(2)IV(2)). Interacts with AFG1L. Interacts with PHB2; the interaction decreases in absence of SPHK2. Interacts with ABCB7; this interaction allows the regulation of cellular iron homeostasis and cellular reactive oxygen species (ROS) levels in cardiomyocytes. Interacts with FLVCR2; this interaction occurs in the absence of heme and is disrupted upon heme binding. Interacts with IRGC. As to expression, ubiquitous.

It localises to the mitochondrion inner membrane. The protein operates within energy metabolism; oxidative phosphorylation. Functionally, component of the cytochrome c oxidase, the last enzyme in the mitochondrial electron transport chain which drives oxidative phosphorylation. The respiratory chain contains 3 multisubunit complexes succinate dehydrogenase (complex II, CII), ubiquinol-cytochrome c oxidoreductase (cytochrome b-c1 complex, complex III, CIII) and cytochrome c oxidase (complex IV, CIV), that cooperate to transfer electrons derived from NADH and succinate to molecular oxygen, creating an electrochemical gradient over the inner membrane that drives transmembrane transport and the ATP synthase. Cytochrome c oxidase is the component of the respiratory chain that catalyzes the reduction of oxygen to water. Electrons originating from reduced cytochrome c in the intermembrane space (IMS) are transferred via the dinuclear copper A center (CU(A)) of subunit 2 and heme A of subunit 1 to the active site in subunit 1, a binuclear center (BNC) formed by heme A3 and copper B (CU(B)). The BNC reduces molecular oxygen to 2 water molecules using 4 electrons from cytochrome c in the IMS and 4 protons from the mitochondrial matrix. The protein is Cytochrome c oxidase subunit 4 isoform 1, mitochondrial of Homo sapiens (Human).